The chain runs to 473 residues: Proline transporter 1 (473 aa).

Over residues 1 to 11 (MDQHQLDEENQ) the composition is skewed to basic and acidic residues. The tract at residues 1–31 (MDQHQLDEENQRAALFHSSAPSSSLGADGEE) is disordered. Transmembrane regions (helical) follow at residues 65–85 (PWYQ…VLGY), 88–108 (SIMV…AAAI), 145–165 (LTWA…IILA), 188–208 (IALS…LSAL), 210–230 (IWLG…FVMS), 252–272 (IFTT…GMLP), 290–310 (LWFQ…MGYW), 333–353 (VANL…ASPM), 378–398 (VGVR…LPFL), 401–421 (FMSL…ANHM), and 437–457 (WHWL…VAAV).

This sequence belongs to the amino acid/polyamine transporter 2 family. Amino acid/auxin permease (AAAP) (TC 2.A.18.3) subfamily. In terms of tissue distribution, expressed in roots, leaf blades and sheaths, stems and young panicle.

The protein localises to the cell membrane. Functionally, proline transporter that mediates proline transport across the plasma membrane when expressed in a heterologous system (Xenopus oocytes). The polypeptide is Proline transporter 1 (PROT1) (Oryza sativa subsp. japonica (Rice)).